The primary structure comprises 120 residues: Aspartate 1-decarboxylase (120 aa).

Ser24 acts as the Schiff-base intermediate with substrate; via pyruvic acid in catalysis. Ser24 carries the pyruvic acid (Ser) modification. Thr56 serves as a coordination point for substrate. The active-site Proton donor is the Tyr57. Gly70–Ala72 serves as a coordination point for substrate.

This sequence belongs to the PanD family. Heterooctamer of four alpha and four beta subunits. It depends on pyruvate as a cofactor. Is synthesized initially as an inactive proenzyme, which is activated by self-cleavage at a specific serine bond to produce a beta-subunit with a hydroxyl group at its C-terminus and an alpha-subunit with a pyruvoyl group at its N-terminus.

It is found in the cytoplasm. The enzyme catalyses L-aspartate + H(+) = beta-alanine + CO2. The protein operates within cofactor biosynthesis; (R)-pantothenate biosynthesis; beta-alanine from L-aspartate: step 1/1. Its function is as follows. Catalyzes the pyruvoyl-dependent decarboxylation of aspartate to produce beta-alanine. The chain is Aspartate 1-decarboxylase from Pyrobaculum islandicum (strain DSM 4184 / JCM 9189 / GEO3).